A 229-amino-acid chain; its full sequence is UPF0441 protein YE3666 (229 aa).

Disordered regions lie at residues 101 to 125 (PAQA…QQSG) and 190 to 229 (KPAV…SMGG). Composition is skewed to low complexity over residues 109–120 (TSSSSSETTAAA) and 214–229 (RSAA…SMGG).

This sequence belongs to the UPF0441 family.

This is UPF0441 protein YE3666 from Yersinia enterocolitica serotype O:8 / biotype 1B (strain NCTC 13174 / 8081).